The chain runs to 188 residues: Large ribosomal subunit protein bL35m (188 aa).

Belongs to the bacterial ribosomal protein bL35 family.

It localises to the mitochondrion. This Bos taurus (Bovine) protein is Large ribosomal subunit protein bL35m (MRPL35).